Reading from the N-terminus, the 415-residue chain is Lysosome-associated membrane glycoprotein 2 (415 aa).

The N-terminal stretch at 1–25 is a signal peptide; it reads MCLSPVKGAKLILIFLFLGAVQSNA. The interval 26–188 is first lumenal domain; that stretch reads LIVNLTDSKG…SKNEQVCEED (163 aa). Topologically, residues 26–379 are lumenal; it reads LIVNLTDSKG…AQDCSADEDN (354 aa). 7 N-linked (GlcNAc...) asparagine glycosylation sites follow: asparagine 29, asparagine 45, asparagine 54, asparagine 57, asparagine 97, asparagine 115, and asparagine 175. A disulfide bond links cysteine 37 and cysteine 75. Cysteine 149 and cysteine 185 are joined by a disulfide. The interval 189-233 is hinge; that stretch reads QTPTTVAPIIHTTAPSTTTTLTPTSTPTPTPTPTPTVGNYSIRNG. Over residues 202-213 the composition is skewed to low complexity; it reads APSTTTTLTPTS. Residues 202–227 form a disordered region; the sequence is APSTTTTLTPTSTPTPTPTPTPTVGN. Asparagine 227, asparagine 234, asparagine 247, asparagine 265, asparagine 280, asparagine 312, asparagine 317, asparagine 322, and asparagine 361 each carry an N-linked (GlcNAc...) asparagine glycan. The segment at 234–379 is second lumenal domain; that stretch reads NTTCLLATMG…AQDCSADEDN (146 aa). Cysteines 237 and 270 form a disulfide. The cysteines at positions 336 and 373 are disulfide-linked. A helical transmembrane segment spans residues 380-404; that stretch reads FLVPIAVGAALGGVLILVLLAYFIG. The Cytoplasmic segment spans residues 405–415; it reads LKRHHTGYEQF. The tract at residues 406 to 409 is important for binding and subsequent lysosomal degradation of target proteins; the sequence is KRHH.

The protein belongs to the LAMP family. As to quaternary structure, monomer. Forms large homooligomers. Interacts (via its cytoplasmic region) with HSPA8; HSPA8 mediates recruitment of proteins with a KFERQ motif to the surface of the lysosome for chaperone-mediated autophagy. Interacts with HSP90 in the lysosome lumen; this enhances LAMP2 stability. Interacts with MLLT11. Interacts with ABCB9. Interacts with FURIN. Interacts with CT55; this interaction may be important for LAMP2 protein stability. Interacts with TMEM175; inhibiting the proton channel activity of TMEM175. Forms a ternary complex with RAB7A and RUFY4 (via RUN domain); the interaction with RAB7A is mediated by RUFY4 (via RUN and coiled coil domains). Post-translationally, extensively N-glycosylated. Contains a minor proportion of O-linked glycans. As to expression, detected in liver and kidney (at protein level). Detected in liver and kidney.

It localises to the lysosome membrane. The protein resides in the endosome membrane. It is found in the cytoplasmic vesicle. The protein localises to the autophagosome membrane. Its subcellular location is the cell membrane. Lysosomal membrane glycoprotein which plays an important role in lysosome biogenesis, lysosomal pH regulation and autophagy. Acts as an important regulator of lysosomal lumen pH regulation by acting as a direct inhibitor of the proton channel TMEM175, facilitating lysosomal acidification for optimal hydrolase activity. Plays an important role in chaperone-mediated autophagy, a process that mediates lysosomal degradation of proteins in response to various stresses and as part of the normal turnover of proteins with a long biological half-live. Functions by binding target proteins, such as GAPDH, NLRP3 and MLLT11, and targeting them for lysosomal degradation. In the chaperone-mediated autophagy, acts downstream of chaperones, such as HSPA8/HSC70, which recognize and bind substrate proteins and mediate their recruitment to lysosomes, where target proteins bind LAMP2. Plays a role in lysosomal protein degradation in response to starvation. Required for the fusion of autophagosomes with lysosomes during autophagy. Cells that lack LAMP2 express normal levels of VAMP8, but fail to accumulate STX17 on autophagosomes, which is the most likely explanation for the lack of fusion between autophagosomes and lysosomes. Required for normal degradation of the contents of autophagosomes. Required for efficient MHC class II-mediated presentation of exogenous antigens via its function in lysosomal protein degradation; antigenic peptides generated by proteases in the endosomal/lysosomal compartment are captured by nascent MHC II subunits. Is not required for efficient MHC class II-mediated presentation of endogenous antigens. In Mus musculus (Mouse), this protein is Lysosome-associated membrane glycoprotein 2 (Lamp2).